The following is a 117-amino-acid chain: Protein RALF-like 27 (117 aa).

An N-terminal signal peptide occupies residues 1-27 (MTKTFFSFSFFFTSSLLLLLAATSATA). Positions 28–71 (STGNVTSGLRYDGCAPGDTVGECITATVEEEDEEGVEAVVRRIL) are cleaved as a propeptide — removed in mature form. The N-linked (GlcNAc...) asparagine glycan is linked to Asn-31. 2 disulfides stabilise this stretch: Cys-88-Cys-96 and Cys-107-Cys-113.

This sequence belongs to the plant rapid alkalinization factor (RALF) family.

It is found in the secreted. Its function is as follows. Cell signaling peptide that may regulate plant stress, growth, and development. Mediates a rapid alkalinization of extracellular space by mediating a transient increase in the cytoplasmic Ca(2+) concentration leading to a calcium-dependent signaling events through a cell surface receptor and a concomitant activation of some intracellular mitogen-activated protein kinases. The chain is Protein RALF-like 27 (RALFL27) from Arabidopsis thaliana (Mouse-ear cress).